A 310-amino-acid polypeptide reads, in one-letter code: Fucose-specific lectin (310 aa).

Tandem repeats lie at residues 1–53 (MSTP…KNVI), 54–103 (AKAK…AGAK), 104–151 (FTVA…EGTN), 152–209 (LGVA…FDKA), 210–256 (PPRC…DKRT), and 257–310 (ITPV…PPAE). The interval 1 to 310 (MSTPGAQEVL…LGRRALPPAE (310 aa)) is 6 X approximate tandem repeats. Arginine 25, glutamate 37, tryptophan 44, arginine 73, glutamate 85, tryptophan 94, arginine 126, glutamate 138, tryptophan 146, arginine 177, glutamine 189, tryptophan 198, arginine 230, glutamine 242, arginine 277, and glutamate 291 together coordinate beta-L-fucose.

This sequence belongs to the fungal fucose-specific lectin family.

Its function is as follows. Lectin that specifically binds to L-fucose and weakly reacts with mannose and N-acetyl-neuraminic acid. Has strongest preference for the alpha-1,6-fucosylated chain (core fucose) on glycoproteins among alpha-1,2-, alpha-1,3-, alpha-1,4-, and alpha-1,6-fucosylated chains. Binds to fucose residues of IgE in mice and human, causing antigen-independent IgE-mediated mast cell activation and anaphylactoid reactions in mice and is possibly implicated in allergic response to Aspergillus oryzae in humans. Induces secretion of pro-inflammatory cytokines IL6 and IL8 implicated in ocular diseases such as mycotic keratitis, probably through its interaction with host toll-like receptors TLR2 and TLR4, followed by up-regulation of pro-inflammatory cytokines. The chain is Fucose-specific lectin from Aspergillus oryzae (Yellow koji mold).